Consider the following 404-residue polypeptide: 2,3-bisphosphoglycerate-independent phosphoglycerate mutase (404 aa).

The segment at 155–183 (LSDMIGDSDPHREGLPPEKIRPTDPSGDR) is disordered. A compositionally biased stretch (basic and acidic residues) spans 162-183 (SDPHREGLPPEKIRPTDPSGDR).

Belongs to the BPG-independent phosphoglycerate mutase family. A-PGAM subfamily.

The enzyme catalyses (2R)-2-phosphoglycerate = (2R)-3-phosphoglycerate. It participates in carbohydrate degradation; glycolysis; pyruvate from D-glyceraldehyde 3-phosphate: step 3/5. In terms of biological role, catalyzes the interconversion of 2-phosphoglycerate and 3-phosphoglycerate. In Thermoplasma acidophilum (strain ATCC 25905 / DSM 1728 / JCM 9062 / NBRC 15155 / AMRC-C165), this protein is 2,3-bisphosphoglycerate-independent phosphoglycerate mutase.